The following is a 105-amino-acid chain: uncharacterized protein (105 aa).

This sequence belongs to the EspC family.

Functionally, may be involved in assembly of the ESX-1 / type VII specialized secretion system (T7SS), which exports several proteins including EsxA and EsxB. Involved in DNA conjugation, in at least recipient strain. This is an uncharacterized protein from Mycolicibacterium smegmatis (strain MKD8) (Mycobacterium smegmatis).